The primary structure comprises 358 residues: Cyclin-dependent kinase 11 (358 aa).

Positions 52 to 336 constitute a Protein kinase domain; the sequence is FKKLYTINEG…ASDALKHPYF (285 aa). ATP-binding positions include 58–66 and Lys81; that span reads INEGAFGVV. Catalysis depends on Asp176, which acts as the Proton acceptor.

This sequence belongs to the protein kinase superfamily. CMGC Ser/Thr protein kinase family. CDC2/CDKX subfamily.

The enzyme catalyses L-seryl-[protein] + ATP = O-phospho-L-seryl-[protein] + ADP + H(+). The catalysed reaction is L-threonyl-[protein] + ATP = O-phospho-L-threonyl-[protein] + ADP + H(+). This is Cyclin-dependent kinase 11 (cdk11) from Dictyostelium discoideum (Social amoeba).